The following is a 374-amino-acid chain: MENSQLVSITFLAYTIIISIGSINCIDNNNLVTNQSALFVFGDSVFDAGNNNYIDTLSSVRSNYWPYGQTTFKSPTGRVSDGRLIPDFIAEYAWLPLIPPNLQPFNGNSQFAYGVNFASGGAGALVGTFSGLVINLRTQLNNFKKVEEMLRSKLGDAEGKRVISRAVYLFHIGLNDYQYPFTTNSSLFQSISNEKYVDYVVGNMTDVFKEVYNLGGRKFGILNTGPYDCAPASLVIDQTKIRSCFQPVTELINMHNEKLLNGLRRLNHELSGFKYALHDYHTSLSERMNDPSKYGFKEGKKACCGSGPLRGINTCGGRMGLSQSYELCENVTDYLFFDPFHLTEKANRQIAELIWSGPTNITGPYNLKALFELN.

The signal sequence occupies residues 1–25 (MENSQLVSITFLAYTIIISIGSINC). Residue Asn34 is glycosylated (N-linked (GlcNAc...) asparagine). The active-site Nucleophile is the Ser44. Asn184, Asn203, and Asn330 each carry an N-linked (GlcNAc...) asparagine glycan. Residues Asp338 and His341 each act as charge relay system in the active site. Asn360 carries an N-linked (GlcNAc...) asparagine glycan.

This sequence belongs to the 'GDSL' lipolytic enzyme family.

Its subcellular location is the secreted. In terms of biological role, confers resistance to the necrotrophic fungus Alternaria brassicicola. Possesses lipase and antimicrobial activities that directly disrupt fungal spore integrity. Triggers systemic resistance, mostly by the ethylene-dependent pathway. The polypeptide is GDSL esterase/lipase 1 (Arabidopsis thaliana (Mouse-ear cress)).